The primary structure comprises 151 residues: Neuroglobin (151 aa).

Residues methionine 1–aspartate 149 enclose the Globin domain. Heme b-binding residues include histidine 64 and histidine 96.

It belongs to the globin family. As to quaternary structure, monomer. Homodimer and homotetramer; disulfide-linked. Mainly monomeric but also detected as part of homodimers and homotetramers. Interacts with 14-3-3 proteins; regulates the phosphorylation of NGB. Could interact (ferrous form) with G-alpha(i) proteins (GTP-bound form). Phosphorylated during hypoxia by ERK1/ERK2. Phosphorylation regulates the heme pocket hexacoordination preventing the association of His-64 with the heme metal center. Thereby, promotes the access of dioxygen and nitrite to the heme and stimulates the nitrite reductase activity. Phosphorylation during hypoxia is stabilized by 14-3-3 proteins.

The protein localises to the cytoplasm. It localises to the cytosol. Its subcellular location is the mitochondrion matrix. The enzyme catalyses Fe(III)-heme b-[protein] + nitric oxide + H2O = Fe(II)-heme b-[protein] + nitrite + 2 H(+). Monomeric globin with a bis-histidyl six-coordinate heme-iron atom through which it can bind dioxygen, carbon monoxide and nitric oxide. Could help transport oxygen and increase its availability to the metabolically active neuronal tissues, though its low quantity in tissues as well as its high affinity for dioxygen, which may limit its oxygen-releasing ability, argue against it. The ferrous/deoxygenated form exhibits a nitrite reductase activity and it could produce nitric oxide which in turn inhibits cellular respiration in response to hypoxia. In its ferrous/deoxygenated state, it may also exhibit GDI (Guanine nucleotide Dissociation Inhibitor) activity toward heterotrimeric G-alpha proteins, thereby regulating signal transduction to facilitate neuroprotective responses in the wake of hypoxia and associated oxidative stress. The protein is Neuroglobin of Canis lupus familiaris (Dog).